The sequence spans 1514 residues: ABC transporter C family member 3 (1514 aa).

Helical transmembrane passes span 35-55 (PLFL…VLFF), 83-103 (ALFC…LSGF), 116-136 (LVSS…SICL), 153-173 (LWLV…FVMY), 183-203 (LLVF…VAVL), 325-345 (ILVT…GPAL), 364-386 (YVLV…HWFF), 439-459 (WYMH…WILY), 463-483 (GLAS…NFPF), and 551-571 (FVFW…CILL). The region spanning 325 to 606 (ILVTAFFAFI…LPDTISMIVQ (282 aa)) is the ABC transmembrane type-1 1 domain. Residues 640 to 863 (VEVINSTLSW…GTDFMELIGA (224 aa)) form the ABC transporter 1 domain. 675 to 682 (GTVGSGKS) is a binding site for ATP. The next 5 helical transmembrane spans lie at 940-960 (YITL…QVLF), 987-1007 (LSTL…CILL), 1077-1097 (IGII…FIPV), 1181-1201 (LSSL…TGVI), and 1205-1225 (LAGL…WLIW). Positions 950–1232 (VPFILLGQVL…LIWTLCNLEN (283 aa)) constitute an ABC transmembrane type-1 2 domain. In terms of domain architecture, ABC transporter 2 spans 1271-1503 (IRDLQVRYAP…KSSSFSKLVA (233 aa)). 1303-1310 (GRTGSGKS) contributes to the ATP binding site.

It belongs to the ABC transporter superfamily. ABCC family. Conjugate transporter (TC 3.A.1.208) subfamily. In terms of tissue distribution, ubiquitous.

Its subcellular location is the membrane. The enzyme catalyses ATP + H2O + xenobioticSide 1 = ADP + phosphate + xenobioticSide 2.. Glutathione-conjugate transport is inhibited by decyl-glutathione and, to a lower extent, by GS-GS, but not by GSH. All transports are inhibited by vanadate. Pump for glutathione S-conjugates. Mediates the transport of glutathione conjugates such as chlorodinitrobenzene-GS (DNB-GS), and of chlorophyll catabolites such as Bn-NCC-1. Also transports heavy metals such as cadmium (Cd). This is ABC transporter C family member 3 (ABCC3) from Arabidopsis thaliana (Mouse-ear cress).